We begin with the raw amino-acid sequence, 457 residues long: Dolichol phosphate-mannose mannosyltransferase (457 aa).

The Cytoplasmic portion of the chain corresponds to 1–12 (MKRLAKAAFSQN). The helical transmembrane segment at 13 to 33 (SLTAPIVSTFVYLISVVRVVL) threads the bilayer. The Extracellular portion of the chain corresponds to 34-91 (NGNWPVTSSDTAMFQHIGWMVFSGKRYYIDAWDPKPPLTLELATIIAYISNGDPHLQH). A helical membrane pass occupies residues 92–112 (TLSVVSTIVAGILLTYLISHI). Residues 113 to 120 (TSEITGNQ) are Cytoplasmic-facing. A helical membrane pass occupies residues 121–141 (FAGLLSGIVFITFPVIHYSAV). Residues 142 to 173 (FGYEPKYFVFLFGLGSIYLSRNPKPILSGAAA) lie on the Extracellular side of the membrane. The chain crosses the membrane as a helical span at residues 174–194 (AASAGMWQFAIIFPIISFGII). Residues 195–211 (SRRKSKDLILKYVFGAT) are Cytoplasmic-facing. A helical transmembrane segment spans residues 212–232 (IIAFISLLPIYLQGGLVAMTV). At 233–259 (EVIIAPLYAGETQSFLYRLVKGVTHLK) the chain is on the extracellular side. A helical transmembrane segment spans residues 260 to 280 (LMIPIALLGMAGILLGFLDDI). The Cytoplasmic portion of the chain corresponds to 281 to 283 (RER). The helical transmembrane segment at 284–304 (WWVVGLLLWFCIQIFILDYDG) threads the bilayer. At 305–307 (ADD) the chain is on the extracellular side. A helical transmembrane segment spans residues 308-328 (LFLGIILVSMGIGFAFEKLST). Over 329-337 (KYESERINS) the chain is Cytoplasmic. A helical transmembrane segment spans residues 338-358 (IVTAVVVCMLIWQVVTLGGVG). Topologically, residues 359–457 (VITNPYSYSG…EEKCGKWRLP (99 aa)) are extracellular.

The protein resides in the cell membrane. It functions in the pathway cell surface structure biogenesis; S-layer biogenesis. Its pathway is protein modification; protein glycosylation. Functionally, involved in the assembly of a N-linked pentasaccharide that decorates the S-layer glycoprotein and flagellins. Transfers mannose, the terminal pentasaccharide residue, from its dedicated dolichol phosphate carrier to the protein-bound glycan comprising the first four subunits of the N-linked pentasaccharide. This Haloferax volcanii (strain ATCC 29605 / DSM 3757 / JCM 8879 / NBRC 14742 / NCIMB 2012 / VKM B-1768 / DS2) (Halobacterium volcanii) protein is Dolichol phosphate-mannose mannosyltransferase (aglS).